Reading from the N-terminus, the 247-residue chain is Ribosomal RNA processing protein 36 homolog (247 aa).

Disordered regions lie at residues 1-29 (MDNQ…HLKD), 62-89 (RTQG…QRVP), 136-188 (SVEK…RELV), and 218-247 (GKLQ…QVDQ). Positions 8–23 (SSDDESPTDDCSDEGE) are enriched in acidic residues. Composition is skewed to basic and acidic residues over residues 136 to 153 (SVEK…RKNL) and 164 to 174 (ERSRKSAEAKR). Basic residues predominate over residues 218–240 (GKLQKYLTKRRKKTASKDRRHVP).

The protein belongs to the RRP36 family.

It is found in the nucleus. The protein localises to the nucleolus. In terms of biological role, involved in the early processing steps of the pre-rRNA in the maturation pathway leading to the 18S rRNA. This chain is Ribosomal RNA processing protein 36 homolog, found in Nematostella vectensis (Starlet sea anemone).